The chain runs to 33 residues: Protamine TP17 (33 aa).

A disordered region spans residues Met-1–Arg-33.

In terms of tissue distribution, testis.

The protein resides in the nucleus. It is found in the chromosome. Functionally, protamines substitute for histones in the chromatin of sperm during the haploid phase of spermatogenesis. They compact sperm DNA into a highly condensed, stable and inactive complex. The chain is Protamine TP17 from Oncorhynchus mykiss (Rainbow trout).